The chain runs to 351 residues: Thiamine-phosphate synthase (351 aa).

A unknown region spans residues 1 to 129 (MVEPYSQKEQ…AKACKQMRYQ (129 aa)). Residues 65–85 (LRAARDTPGDPGTELTHPQEE) form a disordered region. Residues 130–351 (VYTLESNLMG…SQLNRIKPEL (222 aa)) form a thiamine-phosphate synthase region. Residues 177-181 (QYRDK) and Asn-209 contribute to the 4-amino-2-methyl-5-(diphosphooxymethyl)pyrimidine site. Residues Asp-210 and Asp-229 each coordinate Mg(2+). Ser-248 lines the 4-amino-2-methyl-5-(diphosphooxymethyl)pyrimidine pocket. 274 to 276 (TPT) is a binding site for 2-[(2R,5Z)-2-carboxy-4-methylthiazol-5(2H)-ylidene]ethyl phosphate. Lys-277 provides a ligand contact to 4-amino-2-methyl-5-(diphosphooxymethyl)pyrimidine. 2-[(2R,5Z)-2-carboxy-4-methylthiazol-5(2H)-ylidene]ethyl phosphate is bound at residue Gly-304.

Belongs to the thiamine-phosphate synthase family. The cofactor is Mg(2+).

It carries out the reaction 2-[(2R,5Z)-2-carboxy-4-methylthiazol-5(2H)-ylidene]ethyl phosphate + 4-amino-2-methyl-5-(diphosphooxymethyl)pyrimidine + 2 H(+) = thiamine phosphate + CO2 + diphosphate. It catalyses the reaction 2-(2-carboxy-4-methylthiazol-5-yl)ethyl phosphate + 4-amino-2-methyl-5-(diphosphooxymethyl)pyrimidine + 2 H(+) = thiamine phosphate + CO2 + diphosphate. The catalysed reaction is 4-methyl-5-(2-phosphooxyethyl)-thiazole + 4-amino-2-methyl-5-(diphosphooxymethyl)pyrimidine + H(+) = thiamine phosphate + diphosphate. The protein operates within cofactor biosynthesis; thiamine diphosphate biosynthesis; thiamine phosphate from 4-amino-2-methyl-5-diphosphomethylpyrimidine and 4-methyl-5-(2-phosphoethyl)-thiazole: step 1/1. Functionally, condenses 4-methyl-5-(beta-hydroxyethyl)thiazole monophosphate (THZ-P) and 2-methyl-4-amino-5-hydroxymethyl pyrimidine pyrophosphate (HMP-PP) to form thiamine monophosphate (TMP). The polypeptide is Thiamine-phosphate synthase (Nostoc punctiforme (strain ATCC 29133 / PCC 73102)).